A 443-amino-acid polypeptide reads, in one-letter code: Thymidine phosphorylase (443 aa).

The protein belongs to the thymidine/pyrimidine-nucleoside phosphorylase family. As to quaternary structure, homodimer.

The enzyme catalyses thymidine + phosphate = 2-deoxy-alpha-D-ribose 1-phosphate + thymine. It participates in pyrimidine metabolism; dTMP biosynthesis via salvage pathway; dTMP from thymine: step 1/2. Its function is as follows. The enzymes which catalyze the reversible phosphorolysis of pyrimidine nucleosides are involved in the degradation of these compounds and in their utilization as carbon and energy sources, or in the rescue of pyrimidine bases for nucleotide synthesis. The sequence is that of Thymidine phosphorylase from Shewanella denitrificans (strain OS217 / ATCC BAA-1090 / DSM 15013).